The following is a 131-amino-acid chain: D-ribose pyranase (131 aa).

His20 (proton donor) is an active-site residue. Residues Asp28, His98, and 120–122 (YSN) each bind substrate.

Belongs to the RbsD / FucU family. RbsD subfamily. As to quaternary structure, homodecamer.

The protein localises to the cytoplasm. It catalyses the reaction beta-D-ribopyranose = beta-D-ribofuranose. It participates in carbohydrate metabolism; D-ribose degradation; D-ribose 5-phosphate from beta-D-ribopyranose: step 1/2. Its function is as follows. Catalyzes the interconversion of beta-pyran and beta-furan forms of D-ribose. In Lactobacillus johnsonii (strain CNCM I-12250 / La1 / NCC 533), this protein is D-ribose pyranase.